A 344-amino-acid polypeptide reads, in one-letter code: Uroporphyrinogen decarboxylase (344 aa).

Residues 25-29 (RQAGR), Asp-75, Tyr-152, Ser-207, and His-323 contribute to the substrate site.

The protein belongs to the uroporphyrinogen decarboxylase family. Homodimer.

The protein localises to the cytoplasm. The enzyme catalyses uroporphyrinogen III + 4 H(+) = coproporphyrinogen III + 4 CO2. The protein operates within porphyrin-containing compound metabolism; protoporphyrin-IX biosynthesis; coproporphyrinogen-III from 5-aminolevulinate: step 4/4. In terms of biological role, catalyzes the decarboxylation of four acetate groups of uroporphyrinogen-III to yield coproporphyrinogen-III. This is Uroporphyrinogen decarboxylase from Ruegeria pomeroyi (strain ATCC 700808 / DSM 15171 / DSS-3) (Silicibacter pomeroyi).